The sequence spans 151 residues: Ribosome maturation factor RimP (151 aa).

Belongs to the RimP family.

It localises to the cytoplasm. Functionally, required for maturation of 30S ribosomal subunits. This chain is Ribosome maturation factor RimP, found in Synechocystis sp. (strain ATCC 27184 / PCC 6803 / Kazusa).